We begin with the raw amino-acid sequence, 114 residues long: Hemerythrin (114 aa).

Fe cation contacts are provided by H26, H55, E59, H74, H78, H102, and D107.

Belongs to the hemerythrin family. Homooctamer.

Hemerythrin is a respiratory protein in blood cells of certain marine worms. The oxygen-binding site in each chain contains two iron atoms. The chain is Hemerythrin from Phascolopsis gouldii (Peanut worm).